Here is a 253-residue protein sequence, read N- to C-terminus: Tryptophan synthase alpha chain (253 aa).

Catalysis depends on proton acceptor residues Glu-48 and Asp-59.

Belongs to the TrpA family. As to quaternary structure, tetramer of two alpha and two beta chains.

The enzyme catalyses (1S,2R)-1-C-(indol-3-yl)glycerol 3-phosphate + L-serine = D-glyceraldehyde 3-phosphate + L-tryptophan + H2O. It functions in the pathway amino-acid biosynthesis; L-tryptophan biosynthesis; L-tryptophan from chorismate: step 5/5. The alpha subunit is responsible for the aldol cleavage of indoleglycerol phosphate to indole and glyceraldehyde 3-phosphate. The sequence is that of Tryptophan synthase alpha chain from Caldicellulosiruptor saccharolyticus (strain ATCC 43494 / DSM 8903 / Tp8T 6331).